A 1223-amino-acid polypeptide reads, in one-letter code: DNA-directed RNA polymerase subunit beta' (1223 aa).

Residues Cys60, Cys62, Cys75, and Cys78 each coordinate Zn(2+). Residues Asp449, Asp451, and Asp453 each contribute to the Mg(2+) site. Zn(2+) is bound by residues Cys818, Cys892, Cys899, and Cys902.

This sequence belongs to the RNA polymerase beta' chain family. As to quaternary structure, the RNAP catalytic core consists of 2 alpha, 1 beta, 1 beta' and 1 omega subunit. When a sigma factor is associated with the core the holoenzyme is formed, which can initiate transcription. The cofactor is Mg(2+). Zn(2+) serves as cofactor.

It catalyses the reaction RNA(n) + a ribonucleoside 5'-triphosphate = RNA(n+1) + diphosphate. In terms of biological role, DNA-dependent RNA polymerase catalyzes the transcription of DNA into RNA using the four ribonucleoside triphosphates as substrates. The polypeptide is DNA-directed RNA polymerase subunit beta' (Lactobacillus gasseri (strain ATCC 33323 / DSM 20243 / BCRC 14619 / CIP 102991 / JCM 1131 / KCTC 3163 / NCIMB 11718 / NCTC 13722 / AM63)).